Reading from the N-terminus, the 215-residue chain is Cytochrome b6 (215 aa).

A helical transmembrane segment spans residues 32-52; sequence IFHCLGGITLTCFLVQVATGF. Cys35 is a heme c binding site. Residues His86 and His100 each coordinate heme b. 3 helical membrane passes run 90–110, 116–136, and 186–206; these read ASMMVLMMILHVFRVYLTGGF, LTWVTGVVLAVLTASFGVTGY, and LHTFVLPLLTAVFMLMHFPMI. Heme b is bound by residues His187 and His202.

This sequence belongs to the cytochrome b family. PetB subfamily. The 4 large subunits of the cytochrome b6-f complex are cytochrome b6, subunit IV (17 kDa polypeptide, PetD), cytochrome f and the Rieske protein, while the 4 small subunits are PetG, PetL, PetM and PetN. The complex functions as a dimer. Heme b serves as cofactor. It depends on heme c as a cofactor.

The protein resides in the plastid. It is found in the chloroplast thylakoid membrane. Functionally, component of the cytochrome b6-f complex, which mediates electron transfer between photosystem II (PSII) and photosystem I (PSI), cyclic electron flow around PSI, and state transitions. The polypeptide is Cytochrome b6 (Amborella trichopoda).